Reading from the N-terminus, the 100-residue chain is Vesicle-associated membrane protein 8 (100 aa).

The residue at position 1 (methionine 1) is an N-acetylmethionine. The Cytoplasmic portion of the chain corresponds to 1–75 (MEEASEGGGN…ARKFWWKNVK (75 aa)). Phosphoserine occurs at positions 5 and 18. Positions 12 to 72 (RVRNLQSEVE…QKVARKFWWK (61 aa)) constitute a v-SNARE coiled-coil homology domain. Phosphothreonine occurs at positions 28, 48, and 54. Serine 55 carries the phosphoserine modification. 2 (Microbial infection) N6-stearoyl lysine lipidation sites follow: lysine 64 and lysine 68. The helical; Anchor for type IV membrane protein transmembrane segment at 76-96 (MIVLICVIVFIIILFIVLFAT) threads the bilayer. The Vesicular portion of the chain corresponds to 97–100 (GAFS).

It belongs to the synaptobrevin family. As to quaternary structure, forms a SNARE complex composed of VAMP8, SNAP29 and STX17 involved in fusion of autophagosome with lysosome. Found in a number of SNARE complexes with NAPA, SNAP23, SNAP25, STX1A, STX4, STX7, STX8 and VTI1B. Interacts with PICALM. SNARE complex formation and binding by PICALM are mutually exclusive processes for VAMP8. Interacts with SBF2/MTMR13. Interacts with RAB21 (in GTP-bound form) in response to starvation; the interaction probably regulates VAMP8 endolysosomal trafficking. Interacts with STX17; this interaction is increased in the absence of TMEM39A. Interacts with TRIM6. In terms of assembly, (Microbial infection) The interaction with STX17 is decreased in presence of SARS coronavirus-2/SARS-CoV-2 ORF3A protein. Post-translationally, (Microbial infection) Stearoylated By S.flexneri N-epsilon-fatty acyltransferase IcsB, thereby disrupting the host actin cytoskeleton. Platelets.

The protein resides in the lysosome membrane. It is found in the early endosome membrane. It localises to the late endosome membrane. Its subcellular location is the cell membrane. The protein localises to the zymogen granule membrane. SNAREs, soluble N-ethylmaleimide-sensitive factor-attachment protein receptors, are essential proteins for fusion of cellular membranes. SNAREs localized on opposing membranes assemble to form a trans-SNARE complex, an extended, parallel four alpha-helical bundle that drives membrane fusion. VAMP8 is a SNARE involved in autophagy through the direct control of autophagosome membrane fusion with the lysososome membrane via its interaction with the STX17-SNAP29 binary t-SNARE complex. Also required for dense-granule secretion in platelets. Also plays a role in regulated enzyme secretion in pancreatic acinar cells. Involved in the abscission of the midbody during cell division, which leads to completely separate daughter cells. Involved in the homotypic fusion of early and late endosomes. Also participates in the activation of type I interferon antiviral response through a TRIM6-dependent mechanism. This chain is Vesicle-associated membrane protein 8, found in Homo sapiens (Human).